The primary structure comprises 703 residues: Harmonin-binding protein USHBP1 (703 aa).

Over residues methionine 1–histidine 15 the composition is skewed to basic residues. Disordered stretches follow at residues methionine 1–asparagine 113 and histidine 138–glutamate 172. Positions serine 189–proline 227 form a coiled coil. The disordered stretch occupies residues cysteine 228 to glutamine 256. The stretch at glutamate 289–cysteine 309 forms a coiled coil. Positions methionine 396–proline 416 are disordered. Positions alanine 400–glycine 410 are enriched in polar residues. Positions arginine 476–arginine 513 form a coiled coil. The interval alanine 540 to arginine 583 is disordered. Gly residues predominate over residues glycine 572 to valine 581. The stretch at alanine 596–alanine 681 forms a coiled coil.

It belongs to the MCC family. Interacts via its C-terminus with the first PDZ domain of USH1C. As to expression, highest level of expression in heart, and moderate to low expression in skeletal muscle, kidney, liver, small intestine, placenta and lung.

The chain is Harmonin-binding protein USHBP1 from Homo sapiens (Human).